The chain runs to 65 residues: Large ribosomal subunit protein bL32 (65 aa).

Positions 1-19 (MAIVPKRKTSKQRKHKRQS) are enriched in basic residues. Positions 1–21 (MAIVPKRKTSKQRKHKRQSHS) are disordered.

Belongs to the bacterial ribosomal protein bL32 family.

In Mesomycoplasma hyopneumoniae (strain 7448) (Mycoplasma hyopneumoniae), this protein is Large ribosomal subunit protein bL32.